A 388-amino-acid chain; its full sequence is Probable peptidoglycan glycosyltransferase FtsW (388 aa).

At 1-19 the chain is on the cytoplasmic side; sequence MSAAAPKPRPAHRFHIDQT. Residues 20-40 traverse the membrane as a helical segment; sequence LLSVCLCLLGIGFVMVASSSM. Residues 41 to 57 lie on the Periplasmic side of the membrane; sequence HLGVKMADDVSYYPFKQ. A helical membrane pass occupies residues 58–78; the sequence is LVHIILGLMFAAAILAIPMKY. The Cytoplasmic portion of the chain corresponds to 79–85; it reads WQKIGQP. The chain crosses the membrane as a helical span at residues 86 to 106; sequence LFIVGLVLLLVVLIPGVGVKV. The Periplasmic portion of the chain corresponds to 107–117; it reads NGSTRWLSLLG. A helical transmembrane segment spans residues 118 to 137; the sequence is LRIQVSEVMKFISVVYMAGY. Topologically, residues 138-147 are cytoplasmic; that stretch reads ITRHSDHVRH. A helical transmembrane segment spans residues 148-168; sequence SIFGLLRPLMLLSVASILLLL. Topologically, residues 169-170 are periplasmic; sequence EP. Residues 171–191 form a helical membrane-spanning segment; the sequence is DFGSAVVILIIAMGMMFLGGA. Residue Arg192 is a topological domain, cytoplasmic. Residues 193–213 form a helical membrane-spanning segment; it reads LSPFVALVALISSAGAILASS. Residues 214–271 are Periplasmic-facing; the sequence is ADYRVKRMTSFLNPWEHARDSGYQLTQALISFGRGEVSGVGLGNGLQKLFYLPEAHTD. A helical transmembrane segment spans residues 272–292; that stretch reads FLFSVLGEELGLVGVTLVIAL. Residues 293–315 lie on the Cytoplasmic side of the membrane; the sequence is FTTLVVRGFSIGEQAEAAGERFS. Residues 316-336 traverse the membrane as a helical segment; sequence ALVAYGLVIWFGFQAFVNMGV. The Periplasmic segment spans residues 337–348; it reads NMGILPTKGLTL. A helical membrane pass occupies residues 349-369; the sequence is PLMSYGGGSMIVMCGAMAVLF. Residues 370-388 lie on the Cytoplasmic side of the membrane; it reads RIHYEVTELHKSNIKGKSR.

The protein belongs to the SEDS family. FtsW subfamily.

It is found in the cell inner membrane. It catalyses the reaction [GlcNAc-(1-&gt;4)-Mur2Ac(oyl-L-Ala-gamma-D-Glu-L-Lys-D-Ala-D-Ala)](n)-di-trans,octa-cis-undecaprenyl diphosphate + beta-D-GlcNAc-(1-&gt;4)-Mur2Ac(oyl-L-Ala-gamma-D-Glu-L-Lys-D-Ala-D-Ala)-di-trans,octa-cis-undecaprenyl diphosphate = [GlcNAc-(1-&gt;4)-Mur2Ac(oyl-L-Ala-gamma-D-Glu-L-Lys-D-Ala-D-Ala)](n+1)-di-trans,octa-cis-undecaprenyl diphosphate + di-trans,octa-cis-undecaprenyl diphosphate + H(+). Its pathway is cell wall biogenesis; peptidoglycan biosynthesis. In terms of biological role, peptidoglycan polymerase that is essential for cell division. This is Probable peptidoglycan glycosyltransferase FtsW from Methylomonas methanica (strain DSM 25384 / MC09).